Consider the following 536-residue polypeptide: Lysosomal acid glucosylceramidase (536 aa).

The N-terminal stretch at 1-39 (MELSSPSREECPRPQGRVGIMAASLMGLLLLQAASWASG) is a signal peptide. Disulfide bonds link Cys43–Cys55 and Cys57–Cys62. 3 N-linked (GlcNAc...) asparagine glycosylation sites follow: Asn58, Asn98, and Asn185. Glu274 (proton donor) is an active-site residue. N-linked (GlcNAc...) asparagine glycosylation is present at Asn309. The Nucleophile role is filled by Glu379. An N-linked (GlcNAc...) asparagine glycan is attached at Asn501.

The protein belongs to the glycosyl hydrolase 30 family. As to quaternary structure, interacts with saposin-C. Interacts with SCARB2. Interacts with TCP1. Interacts with GRN; this interaction prevents aggregation of GBA1-SCARB2 complex via interaction with HSPA1A upon stress.

It localises to the lysosome membrane. The catalysed reaction is a beta-D-glucosyl-(1&lt;-&gt;1')-N-acylsphing-4-enine + H2O = an N-acylsphing-4-enine + D-glucose. It carries out the reaction a beta-D-galactosyl-(1&lt;-&gt;1')-N-acylsphing-4-enine + H2O = an N-acylsphing-4-enine + D-galactose. It catalyses the reaction cholesteryl 3-beta-D-glucoside + H2O = cholesterol + D-glucose. The enzyme catalyses a beta-D-glucosyl-(1&lt;-&gt;1')-N-acylsphing-4-enine + cholesterol = cholesteryl 3-beta-D-glucoside + an N-acylsphing-4-enine. The catalysed reaction is beta-D-glucosyl-N-(9Z-octadecenoyl)-sphing-4E-enine + cholesterol = N-(9Z-octadecenoyl)-sphing-4-enine + cholesteryl 3-beta-D-glucoside. It carries out the reaction beta-D-glucosyl-N-octanoylsphing-4E-enine + cholesterol = N-octanoylsphing-4-enine + cholesteryl 3-beta-D-glucoside. It catalyses the reaction beta-D-glucosyl-N-dodecanoylsphing-4-enine + cholesterol = N-dodecanoylsphing-4-enine + cholesteryl 3-beta-D-glucoside. The enzyme catalyses beta-D-glucosyl-(1&lt;-&gt;1)-N-octadecanoylsphing-4-enine + cholesterol = N-octadecanoylsphing-4-enine + cholesteryl 3-beta-D-glucoside. The catalysed reaction is beta-D-glucosyl-(1&lt;-&gt;1')-N-(15Z-tetracosenoyl)-sphing-4-enine + cholesterol = N-(15Z-tetracosenoyl)-sphing-4-enine + cholesteryl 3-beta-D-glucoside. It carries out the reaction a beta-D-galactosyl-(1&lt;-&gt;1')-N-acylsphing-4-enine + cholesterol = cholesteryl 3-beta-D-galactoside + an N-acylsphing-4-enine. It catalyses the reaction 1-(beta-D-galactosyl)-N-dodecanoylsphing-4-enine + cholesterol = cholesteryl 3-beta-D-galactoside + N-dodecanoylsphing-4-enine. The enzyme catalyses a beta-D-xylosyl-(1&lt;-&gt;1')-N-acylsphing-4-enine + cholesterol = cholesteryl 3-beta-D-xyloside + an N-acylsphing-4-enine. The catalysed reaction is beta-D-xylosyl-(1&lt;-&gt;1')-N-(9Z-octadecenoyl)-sphing-4-enine + cholesterol = cholesteryl 3-beta-D-xyloside + N-(9Z-octadecenoyl)-sphing-4-enine. The protein operates within steroid metabolism; cholesterol metabolism. Its pathway is sphingolipid metabolism. Functionally, glucosylceramidase that catalyzes, within the lysosomal compartment, the hydrolysis of glucosylceramides/GlcCers (such as beta-D-glucosyl-(1&lt;-&gt;1')-N-acylsphing-4-enine) into free ceramides (such as N-acylsphing-4-enine) and glucose. Plays a central role in the degradation of complex lipids and the turnover of cellular membranes. Through the production of ceramides, participates in the PKC-activated salvage pathway of ceramide formation. Catalyzes the glucosylation of cholesterol, through a transglucosylation reaction where glucose is transferred from GlcCer to cholesterol. GlcCer containing mono-unsaturated fatty acids (such as beta-D-glucosyl-N-(9Z-octadecenoyl)-sphing-4-enine) are preferred as glucose donors for cholesterol glucosylation when compared with GlcCer containing same chain length of saturated fatty acids (such as beta-D-glucosyl-N-octadecanoyl-sphing-4-enine). Under specific conditions, may alternatively catalyze the reverse reaction, transferring glucose from cholesteryl 3-beta-D-glucoside to ceramide. Can also hydrolyze cholesteryl 3-beta-D-glucoside producing glucose and cholesterol. Catalyzes the hydrolysis of galactosylceramides/GalCers (such as beta-D-galactosyl-(1&lt;-&gt;1')-N-acylsphing-4-enine), as well as the transfer of galactose between GalCers and cholesterol in vitro, but with lower activity than with GlcCers. Contrary to GlcCer and GalCer, xylosylceramide/XylCer (such as beta-D-xyosyl-(1&lt;-&gt;1')-N-acylsphing-4-enine) is not a good substrate for hydrolysis, however it is a good xylose donor for transxylosylation activity to form cholesteryl 3-beta-D-xyloside. The protein is Lysosomal acid glucosylceramidase (GBA1) of Sus scrofa (Pig).